Here is a 494-residue protein sequence, read N- to C-terminus: Inosine-5'-monophosphate dehydrogenase (494 aa).

CBS domains lie at 93 to 154 (IIRN…NEKI) and 158 to 217 (MTTD…CKDM). NAD(+)-binding positions include Asp251 and 301-303 (GIG). Positions 303 and 305 each coordinate K(+). IMP is bound at residue Ser306. K(+) is bound at residue Cys308. Cys308 acts as the Thioimidate intermediate in catalysis. IMP contacts are provided by residues 341–343 (DGG), 364–365 (GS), and 388–392 (YRGMG). Arg406 functions as the Proton acceptor in the catalytic mechanism. Glu421 contacts IMP. 3 residues coordinate K(+): Glu475, Ser476, and His477.

The protein belongs to the IMPDH/GMPR family. In terms of assembly, homotetramer. Requires K(+) as cofactor.

The catalysed reaction is IMP + NAD(+) + H2O = XMP + NADH + H(+). It functions in the pathway purine metabolism; XMP biosynthesis via de novo pathway; XMP from IMP: step 1/1. With respect to regulation, mycophenolic acid (MPA) is a non-competitive inhibitor that prevents formation of the closed enzyme conformation by binding to the same site as the amobile flap. In contrast, mizoribine monophosphate (MZP) is a competitive inhibitor that induces the closed conformation. MPA is a potent inhibitor of mammalian IMPDHs but a poor inhibitor of the bacterial enzymes. MZP is a more potent inhibitor of bacterial IMPDH. In terms of biological role, catalyzes the conversion of inosine 5'-phosphate (IMP) to xanthosine 5'-phosphate (XMP), the first committed and rate-limiting step in the de novo synthesis of guanine nucleotides, and therefore plays an important role in the regulation of cell growth. This chain is Inosine-5'-monophosphate dehydrogenase, found in Chlorobaculum parvum (strain DSM 263 / NCIMB 8327) (Chlorobium vibrioforme subsp. thiosulfatophilum).